Here is a 316-residue protein sequence, read N- to C-terminus: Ribosomal RNA small subunit methyltransferase H (316 aa).

S-adenosyl-L-methionine is bound by residues 35-37 (GGH), Asp55, Phe79, Asp101, and Gln108. A disordered region spans residues 291–316 (AIKPSKDEVDENTRSRSSVLRIAEKL). A compositionally biased stretch (basic and acidic residues) spans 294 to 304 (PSKDEVDENTR).

It belongs to the methyltransferase superfamily. RsmH family.

It is found in the cytoplasm. It carries out the reaction cytidine(1402) in 16S rRNA + S-adenosyl-L-methionine = N(4)-methylcytidine(1402) in 16S rRNA + S-adenosyl-L-homocysteine + H(+). Its function is as follows. Specifically methylates the N4 position of cytidine in position 1402 (C1402) of 16S rRNA. The polypeptide is Ribosomal RNA small subunit methyltransferase H (Vibrio atlanticus (strain LGP32) (Vibrio splendidus (strain Mel32))).